The primary structure comprises 309 residues: Aspartate carbamoyltransferase catalytic subunit (309 aa).

Carbamoyl phosphate contacts are provided by Arg-55 and Thr-56. Lys-85 serves as a coordination point for L-aspartate. Carbamoyl phosphate-binding residues include Arg-106, His-135, and Gln-138. Residues Arg-168 and Arg-230 each contribute to the L-aspartate site. Residues Leu-268 and Pro-269 each coordinate carbamoyl phosphate.

Belongs to the aspartate/ornithine carbamoyltransferase superfamily. ATCase family. As to quaternary structure, heterododecamer (2C3:3R2) of six catalytic PyrB chains organized as two trimers (C3), and six regulatory PyrI chains organized as three dimers (R2).

It carries out the reaction carbamoyl phosphate + L-aspartate = N-carbamoyl-L-aspartate + phosphate + H(+). It participates in pyrimidine metabolism; UMP biosynthesis via de novo pathway; (S)-dihydroorotate from bicarbonate: step 2/3. Catalyzes the condensation of carbamoyl phosphate and aspartate to form carbamoyl aspartate and inorganic phosphate, the committed step in the de novo pyrimidine nucleotide biosynthesis pathway. This is Aspartate carbamoyltransferase catalytic subunit from Vibrio vulnificus (strain CMCP6).